Reading from the N-terminus, the 333-residue chain is MLTLTRICAVSYEVRSTFLFISVLEFAVGFLTNAFIFLVNFWDVVKRQPLSNSDCVLLCLSISRLFLHGLLFLSAIQLTHFQKLSEPLNHSYQAIIMLWIIANQANLWLAACLSLLYCSKLIRFSHTFLICLASWVSRKISQMLLGIILCSCICTVLCVWCFFSRPHFTVTTFLFMNNNTRLNWQIKDLNLFYSFLFCYLWSVPPFLLFLVSSGMLTVSLGRHMRTMKVYTRDSRDPSLEAHIKALKSLVSFFCFFVISSCAAFISVPLLILWRNKIGVMVCVGIMAACPSGHAAVLISGNATLRRAVTTILLWAQSSMKVRADHKADSRTLC.

Over 1-17 (MLTLTRICAVSYEVRST) the chain is Extracellular. A helical transmembrane segment spans residues 18–38 (FLFISVLEFAVGFLTNAFIFL). Residues 39-55 (VNFWDVVKRQPLSNSDC) are Cytoplasmic-facing. A helical membrane pass occupies residues 56-76 (VLLCLSISRLFLHGLLFLSAI). Topologically, residues 77–94 (QLTHFQKLSEPLNHSYQA) are extracellular. A helical transmembrane segment spans residues 95–115 (IIMLWIIANQANLWLAACLSL). Residues 116–142 (LYCSKLIRFSHTFLICLASWVSRKISQ) lie on the Cytoplasmic side of the membrane. Residues 143–163 (MLLGIILCSCICTVLCVWCFF) traverse the membrane as a helical segment. The Extracellular segment spans residues 164–190 (SRPHFTVTTFLFMNNNTRLNWQIKDLN). Residue asparagine 178 is glycosylated (N-linked (GlcNAc...) asparagine). Residues 191–211 (LFYSFLFCYLWSVPPFLLFLV) traverse the membrane as a helical segment. Residues 212 to 251 (SSGMLTVSLGRHMRTMKVYTRDSRDPSLEAHIKALKSLVS) are Cytoplasmic-facing. Residues 252–272 (FFCFFVISSCAAFISVPLLIL) traverse the membrane as a helical segment. Residues 273–276 (WRNK) lie on the Extracellular side of the membrane. A helical membrane pass occupies residues 277–297 (IGVMVCVGIMAACPSGHAAVL). Residues 298 to 333 (ISGNATLRRAVTTILLWAQSSMKVRADHKADSRTLC) lie on the Cytoplasmic side of the membrane.

Belongs to the G-protein coupled receptor T2R family.

Its subcellular location is the membrane. In terms of biological role, receptor that may play a role in the perception of bitterness and is gustducin-linked. May play a role in sensing the chemical composition of the gastrointestinal content. The activity of this receptor may stimulate alpha gustducin, mediate PLC-beta-2 activation and lead to the gating of TRPM5. The protein is Taste receptor type 2 member 38 (TAS2R38) of Pongo pygmaeus (Bornean orangutan).